The chain runs to 472 residues: Protein c-ets-2-A (472 aa).

A PNT domain is found at 85 to 170 (NTFNGFAKKR…EHLEEMMKEH (86 aa)). The segment at residues 366–446 (IQLWQFLLEL…SGKRYVYRFV (81 aa)) is a DNA-binding region (ETS).

Belongs to the ETS family.

The protein resides in the nucleus. In terms of biological role, probable transcription factor. This chain is Protein c-ets-2-A (ets2-a), found in Xenopus laevis (African clawed frog).